The primary structure comprises 256 residues: Dihydroorotate dehydrogenase B (NAD(+)), electron transfer subunit (256 aa).

In terms of domain architecture, FAD-binding FR-type spans 1–101 (MKKAHLTVQS…LGPLGNGFPV (101 aa)). Residues 52 to 55 (RPLS), 69 to 71 (IYR), and 76 to 77 (GT) contribute to the FAD site. 4 residues coordinate [2Fe-2S] cluster: cysteine 220, cysteine 225, cysteine 228, and cysteine 243.

The protein belongs to the PyrK family. As to quaternary structure, heterotetramer of 2 PyrK and 2 PyrD type B subunits. The cofactor is [2Fe-2S] cluster. Requires FAD as cofactor.

The protein operates within pyrimidine metabolism; UMP biosynthesis via de novo pathway; orotate from (S)-dihydroorotate (NAD(+) route): step 1/1. Its function is as follows. Responsible for channeling the electrons from the oxidation of dihydroorotate from the FMN redox center in the PyrD type B subunit to the ultimate electron acceptor NAD(+). This is Dihydroorotate dehydrogenase B (NAD(+)), electron transfer subunit from Bacillus velezensis (strain DSM 23117 / BGSC 10A6 / LMG 26770 / FZB42) (Bacillus amyloliquefaciens subsp. plantarum).